Reading from the N-terminus, the 307-residue chain is Pseudouridine-5'-phosphate glycosidase (307 aa).

Catalysis depends on Glu-28, which acts as the Proton donor. Residues Lys-89 and Val-109 each coordinate substrate. Residue Asp-141 coordinates Mn(2+). Position 143–145 (143–145) interacts with substrate; sequence SAD. Catalysis depends on Lys-162, which acts as the Nucleophile.

The protein belongs to the pseudouridine-5'-phosphate glycosidase family. In terms of assembly, homotrimer. It depends on Mn(2+) as a cofactor.

It carries out the reaction D-ribose 5-phosphate + uracil = psi-UMP + H2O. In terms of biological role, catalyzes the reversible cleavage of pseudouridine 5'-phosphate (PsiMP) to ribose 5-phosphate and uracil. Functions biologically in the cleavage direction, as part of a pseudouridine degradation pathway. This is Pseudouridine-5'-phosphate glycosidase from Nocardioides sp. (strain ATCC BAA-499 / JS614).